Consider the following 236-residue polypeptide: CD81 antigen (236 aa).

Over 1–12 the chain is Cytoplasmic; sequence MGVEGCTKCIKY. Residues 13–33 form a helical membrane-spanning segment; the sequence is LLFVFNFVFWLAGGVILGVAL. At 34-63 the chain is on the extracellular side; that stretch reads WLRHDPQTTSLLYLELGNKPAPNTFYVGIY. Residues 64–84 form a helical membrane-spanning segment; the sequence is ILIAVGAVMMFVGFLGCYGAI. At 85 to 89 the chain is on the cytoplasmic side; it reads QESQC. The chain crosses the membrane as a helical span at residues 90 to 112; it reads LLGTFFTCLVILFACEVAAGIWG. The Extracellular portion of the chain corresponds to 113–201; sequence FVNKDQIAKD…QKIDELFSGK (89 aa). 2 cysteine pairs are disulfide-bonded: cysteine 156/cysteine 190 and cysteine 157/cysteine 175. The helical transmembrane segment at 202-224 threads the bilayer; it reads LYLIGIAAIVVAVIMIFEMILSM. Residue glutamate 219 coordinates cholesterol. Over 225-236 the chain is Cytoplasmic; the sequence is VLCCGIRNSSVY.

It belongs to the tetraspanin (TM4SF) family. Homodimer. Part of a complex composed of CD19, CR2/CD21, CD81 and IFITM1/CD225 in the membrane of mature B cells. Interacts (via the second extracellular domain) with CD19; this interaction is initiated early during biosynthesis in the ER and enables trafficking of only properly folded CD19. Part of a complex that includes MHC class II/HLA-DR molecules and IFITM1. Interacts with IFITM1. Interacts with IFITM2 and IFITM3. Part of integrin-tetraspanin complex composed of CD9, CD81, beta-1 and beta-2 integrins in the membrane of monocyte/macrophages. Interacts (via the second extracellular domain) with integrin ITGAV:ITGB3. Interacts with CD247/CD3 zeta, ICAM1 and CD9 at the immune synapse on T cell membrane. Part of a GPCR-tetraspanin complex consisting at least of ADGRG1, CD81, possibly CD9, and GNA11 in which CD81 enhances the association of ADGRG1 with GNA11. Part of a complex composed of CD9, CD81, PTGFRN and IGSF8. Interacts directly with IGSF8. Interacts with CD53 and SCIMP. Interacts with SAMHD1 (via its C-terminus). Interacts with glypican GPC3 and with the transcriptional repressor HHEX; binding to GPC3 decreases the availability of free CD81 for binding to HHEX, resulting in nuclear translocation of HHEX and transcriptional repression. Interacts with CLDN1. Interacts with CLDN6 and CLDN9. Post-translationally, not glycosylated. In terms of processing, likely constitutively palmitoylated at low levels. Protein palmitoylation is up-regulated upon coligation of BCR and CD9-C2R-CD81 complexes in lipid rafts. As to expression, expressed in oocytes (at protein level). Highly expressed in granulosa cells. Expressed in skeletal muscle mainly in endothelial cells of endomysial capillaries, in satellite cells and myoblasts (at protein level). Expressed in hepatocytes (at protein level).

It localises to the cell membrane. The protein resides in the basolateral cell membrane. Its function is as follows. Structural component of specialized membrane microdomains known as tetraspanin-enriched microdomains (TERMs), which act as platforms for receptor clustering and signaling. Essential for trafficking and compartmentalization of CD19 receptor on the cell surface of activated B cells. Upon initial encounter with a microbial pathogen, enables the assembly of CD19-CR2 and B cell receptor complexes at signaling TERMs, lowering the threshold dose of antigen required to trigger B cell clonal expansion and humoral immune response. In T cells, associates with CD4 or CD8 coreceptors and defines the maturation state of antigen-induced synapses with B cells. Facilitates localization of CD3 in these immune synapses, required for costimulation and sustained activation of T cells, preferentially triggering T helper type 2 immune response. Can act both as positive and negative regulator of homotypic or heterotypic cell-cell fusion processes. In myoblasts, associates with another tetraspanin CD9 in complex with PTGFRN and inhibits myotube fusion during muscle regeneration. In macrophages, associates with CD9 and beta-1 and beta-2 integrins, and prevents macrophage fusion into multinucleated giant cells specialized in ingesting complement-opsonized large particles. Also prevents the fusion between mononuclear cell progenitors into osteoclasts in charge of bone resorption. Positively regulates sperm-egg fusion and may be involved in the acrosome reaction. Regulates protein trafficking in intracellular compartments. In T cells, associates with dNTPase SAMHD1 and defines its subcellular location, enabling its degradation by the proteasome and thereby controlling intracellular dNTP levels. Also regulates integrin-dependent migration of macrophages, particularly relevant for inflammatory response in the lung. (Microbial infection) Specifically required for Plasmodium yoelii infectivity of hepatocytes, controlling sporozoite entry in hepatocytes via the parasitophorous vacuole and subsequent parasite differentiation to exoerythrocytic forms. The chain is CD81 antigen from Mus musculus (Mouse).